Here is a 300-residue protein sequence, read N- to C-terminus: Non-secreted LysM effector LysM16 (300 aa).

A LysM domain is found at 176 to 222; sequence EWHTVFSGDTCQLIEAEYGITLEKFIALNTYVNSTCGNIWPDYAYCV.

It belongs to the secreted LysM effector family.

In terms of biological role, non-secreted LysM effector that might be involved in manipulation of host defenses for successful infection. This Penicillium expansum (Blue mold rot fungus) protein is Non-secreted LysM effector LysM16.